The sequence spans 248 residues: Probable transcriptional regulatory protein FTN_1028 (248 aa).

This sequence belongs to the TACO1 family.

The protein localises to the cytoplasm. The sequence is that of Probable transcriptional regulatory protein FTN_1028 from Francisella tularensis subsp. novicida (strain U112).